The following is a 413-amino-acid chain: Ferredoxin--NADP reductase (413 aa).

At M1 the chain carries N-acetylmethionine. One can recognise a CpcD-like domain in the interval 18–76 (NRLFVYEVIGLSQSTMTDGLDYPIRRSGSTFITVPLKRMNQEMRRITRMGGKIVSIKPL). Residues 74–120 (KPLEGDSPLPHTEGIAKPSQSEGSGSEAVANPAPESNKTMTTTPKEK) are disordered. A compositionally biased stretch (polar residues) spans 107-116 (PESNKTMTTT). The region spanning 133 to 256 (KTPYIGKVLE…TGPVGKEMLL (124 aa)) is the FAD-binding FR-type domain. Residues 192–195 (RLYS), 213–215 (CVR), Y219, 230–232 (VCS), and T271 each bind FAD. NADP(+) contacts are provided by S195 and R215. NADP(+) contacts are provided by residues T271, 303-304 (IP), 333-334 (SR), 343-347 (RMYIQ), 372-373 (GL), and E411.

It belongs to the ferredoxin--NADP reductase type 1 family. Purifies with both the classic phycobilisome (PBS) supercomplex (CpcG-PBS) and a photosystem I-associated PBS called CpcL-PBS; it accumulates to a higher level in CpcL-PBS. In both PBS it can be cross-linked to both phycocyanin subunits. The cofactor is FAD. Acetylated at the N-terminus; 6% of protein in CpcG-PBS and 12% of protein in CpcL-PBS is acetylated.

It is found in the cellular thylakoid membrane. It carries out the reaction 2 reduced [2Fe-2S]-[ferredoxin] + NADP(+) + H(+) = 2 oxidized [2Fe-2S]-[ferredoxin] + NADPH. This chain is Ferredoxin--NADP reductase, found in Synechocystis sp. (strain ATCC 27184 / PCC 6803 / Kazusa).